Reading from the N-terminus, the 64-residue chain is Large ribosomal subunit protein bL35 (64 aa).

Positions 1–45 (MPKMKTHKGAAKRFKKTGKGKIKRRKAFKSHILTKKTPKRKRNLR) are enriched in basic residues. The disordered stretch occupies residues 1–64 (MPKMKTHKGA…EEKRIKRLLP (64 aa)).

Belongs to the bacterial ribosomal protein bL35 family.

The sequence is that of Large ribosomal subunit protein bL35 from Natranaerobius thermophilus (strain ATCC BAA-1301 / DSM 18059 / JW/NM-WN-LF).